Here is a 265-residue protein sequence, read N- to C-terminus: Deoxyribose-phosphate aldolase 2 (265 aa).

The active-site Proton donor/acceptor is Asp108. The active-site Schiff-base intermediate with acetaldehyde is Lys173. Catalysis depends on Lys207, which acts as the Proton donor/acceptor.

This sequence belongs to the DeoC/FbaB aldolase family. DeoC type 2 subfamily.

The protein localises to the cytoplasm. The catalysed reaction is 2-deoxy-D-ribose 5-phosphate = D-glyceraldehyde 3-phosphate + acetaldehyde. Its pathway is carbohydrate degradation; 2-deoxy-D-ribose 1-phosphate degradation; D-glyceraldehyde 3-phosphate and acetaldehyde from 2-deoxy-alpha-D-ribose 1-phosphate: step 2/2. Functionally, catalyzes a reversible aldol reaction between acetaldehyde and D-glyceraldehyde 3-phosphate to generate 2-deoxy-D-ribose 5-phosphate. This chain is Deoxyribose-phosphate aldolase 2 (deoC2), found in Yersinia pestis.